The primary structure comprises 120 residues: NAD(P)H-quinone oxidoreductase subunit 3 (120 aa).

The next 3 membrane-spanning stretches (helical) occupy residues 1 to 21 (MFVLSGYEYLLGFLIICSLVP), 64 to 84 (MFALVFVVFDVETVFLYPWAV), and 89 to 109 (LGLLAFIEALIFIAILVVALV).

It belongs to the complex I subunit 3 family. As to quaternary structure, NDH-1 can be composed of about 15 different subunits; different subcomplexes with different compositions have been identified which probably have different functions.

It localises to the cellular thylakoid membrane. The enzyme catalyses a plastoquinone + NADH + (n+1) H(+)(in) = a plastoquinol + NAD(+) + n H(+)(out). The catalysed reaction is a plastoquinone + NADPH + (n+1) H(+)(in) = a plastoquinol + NADP(+) + n H(+)(out). Its function is as follows. NDH-1 shuttles electrons from an unknown electron donor, via FMN and iron-sulfur (Fe-S) centers, to quinones in the respiratory and/or the photosynthetic chain. The immediate electron acceptor for the enzyme in this species is believed to be plastoquinone. Couples the redox reaction to proton translocation, and thus conserves the redox energy in a proton gradient. Cyanobacterial NDH-1 also plays a role in inorganic carbon-concentration. This chain is NAD(P)H-quinone oxidoreductase subunit 3, found in Trichormus variabilis (strain ATCC 29413 / PCC 7937) (Anabaena variabilis).